Consider the following 264-residue polypeptide: NAD-capped RNA hydrolase NudC (264 aa).

Arg-70 lines the substrate pocket. 2 residues coordinate Zn(2+): Cys-99 and Cys-102. Residue Glu-112 coordinates substrate. Residues Cys-117 and Cys-122 each coordinate Zn(2+). Tyr-127 is a binding site for substrate. The 130-residue stretch at 128–257 (PVICPSIIVA…TIALKLINAT (130 aa)) folds into the Nudix hydrolase domain. A divalent metal cation is bound by residues Ala-166, Glu-182, and Glu-186. Positions 167–188 (GFVEIGESFEQTVEREVFEETG) match the Nudix box motif. Substrate is bound at residue 200–207 (QPWAFPNS). Glu-227 contacts a divalent metal cation. Ala-250 contacts substrate.

Belongs to the Nudix hydrolase family. NudC subfamily. In terms of assembly, homodimer. Requires Mg(2+) as cofactor. It depends on Mn(2+) as a cofactor. Zn(2+) serves as cofactor.

The catalysed reaction is a 5'-end NAD(+)-phospho-ribonucleoside in mRNA + H2O = a 5'-end phospho-adenosine-phospho-ribonucleoside in mRNA + beta-nicotinamide D-ribonucleotide + 2 H(+). The enzyme catalyses NAD(+) + H2O = beta-nicotinamide D-ribonucleotide + AMP + 2 H(+). It catalyses the reaction NADH + H2O = reduced beta-nicotinamide D-ribonucleotide + AMP + 2 H(+). Its function is as follows. mRNA decapping enzyme that specifically removes the nicotinamide adenine dinucleotide (NAD) cap from a subset of mRNAs by hydrolyzing the diphosphate linkage to produce nicotinamide mononucleotide (NMN) and 5' monophosphate mRNA. The NAD-cap is present at the 5'-end of some mRNAs and stabilizes RNA against 5'-processing. Has preference for mRNAs with a 5'-end purine. Catalyzes the hydrolysis of a broad range of dinucleotide pyrophosphates. The sequence is that of NAD-capped RNA hydrolase NudC from Actinobacillus succinogenes (strain ATCC 55618 / DSM 22257 / CCUG 43843 / 130Z).